A 149-amino-acid polypeptide reads, in one-letter code: YbbR-like domain-containing protein in def 5'region (149 aa).

A YbbR-like domain is found at 1–68; the sequence is IPVEVLAQGA…LRPNRVRVVE (68 aa).

The polypeptide is YbbR-like domain-containing protein in def 5'region (Thermus thermophilus).